Reading from the N-terminus, the 403-residue chain is Phosphopentomutase (403 aa).

6 residues coordinate Mn(2+): Asp13, Asp298, His303, Asp339, His340, and His351.

The protein belongs to the phosphopentomutase family. It depends on Mn(2+) as a cofactor.

It is found in the cytoplasm. It carries out the reaction 2-deoxy-alpha-D-ribose 1-phosphate = 2-deoxy-D-ribose 5-phosphate. The catalysed reaction is alpha-D-ribose 1-phosphate = D-ribose 5-phosphate. It participates in carbohydrate degradation; 2-deoxy-D-ribose 1-phosphate degradation; D-glyceraldehyde 3-phosphate and acetaldehyde from 2-deoxy-alpha-D-ribose 1-phosphate: step 1/2. In terms of biological role, isomerase that catalyzes the conversion of deoxy-ribose 1-phosphate (dRib-1-P) and ribose 1-phosphate (Rib-1-P) to deoxy-ribose 5-phosphate (dRib-5-P) and ribose 5-phosphate (Rib-5-P), respectively. In Streptococcus pneumoniae serotype 4 (strain ATCC BAA-334 / TIGR4), this protein is Phosphopentomutase.